Here is a 197-residue protein sequence, read N- to C-terminus: ATP synthase subunit delta', mitochondrial (197 aa).

The N-terminal 19 residues, 1 to 19, are a transit peptide targeting the mitochondrion; that stretch reads MFRRATSTFLSRASATRRF.

The protein belongs to the ATPase epsilon chain family. As to quaternary structure, F-type ATPases have 2 components, CF(1) - the catalytic core - and CF(0) - the membrane proton channel. CF(1) has five subunits: alpha(3), beta(3), gamma(1), delta(1), epsilon(1). CF(0) has three main subunits: a, b and c.

The protein resides in the mitochondrion. It is found in the mitochondrion inner membrane. Mitochondrial membrane ATP synthase (F(1)F(0) ATP synthase or Complex V) produces ATP from ADP in the presence of a proton gradient across the membrane which is generated by electron transport complexes of the respiratory chain. F-type ATPases consist of two structural domains, F(1) - containing the extramembraneous catalytic core, and F(0) - containing the membrane proton channel, linked together by a central stalk and a peripheral stalk. During catalysis, ATP turnover in the catalytic domain of F(1) is coupled via a rotary mechanism of the central stalk subunits to proton translocation. Part of the complex F(1) domain and of the central stalk which is part of the complex rotary element. Rotation of the central stalk against the surrounding alpha(3)beta(3) subunits leads to hydrolysis of ATP in three separate catalytic sites on the beta subunits. The chain is ATP synthase subunit delta', mitochondrial from Pisum sativum (Garden pea).